Reading from the N-terminus, the 864-residue chain is DNA mismatch repair protein MutS (864 aa).

An ATP-binding site is contributed by 613 to 620 (GPNMGGKS).

Belongs to the DNA mismatch repair MutS family.

In terms of biological role, this protein is involved in the repair of mismatches in DNA. It is possible that it carries out the mismatch recognition step. This protein has a weak ATPase activity. In Actinobacillus pleuropneumoniae serotype 3 (strain JL03), this protein is DNA mismatch repair protein MutS.